The following is a 237-amino-acid chain: N-(5'-phosphoribosyl)anthranilate isomerase (237 aa).

It belongs to the TrpF family.

The catalysed reaction is N-(5-phospho-beta-D-ribosyl)anthranilate = 1-(2-carboxyphenylamino)-1-deoxy-D-ribulose 5-phosphate. The protein operates within amino-acid biosynthesis; L-tryptophan biosynthesis; L-tryptophan from chorismate: step 3/5. The protein is N-(5'-phosphoribosyl)anthranilate isomerase (TRP1) of Komagataella pastoris (Yeast).